The following is a 231-amino-acid chain: Endo-1,4-beta-xylanase A (231 aa).

An N-terminal signal peptide occupies residues 1 to 19; it reads MVSFKSLLVAVSALTGALA. Asn-32 carries an N-linked (GlcNAc...) asparagine glycan. The GH11 domain maps to 41-229; it reads QVTGNSEGYH…SSGSSSIYVQ (189 aa). Glu-125 serves as the catalytic Nucleophile. The Proton donor role is filled by Glu-216.

Belongs to the glycosyl hydrolase 11 (cellulase G) family.

It localises to the secreted. The enzyme catalyses Endohydrolysis of (1-&gt;4)-beta-D-xylosidic linkages in xylans.. It participates in glycan degradation; xylan degradation. With respect to regulation, inhibited by the proteinaceous endoxylanase inhibitor I from T.aestivum (TAXI-I). Endo-1,4-beta-xylanase involved in the hydrolysis of xylan, a major structural heterogeneous polysaccharide found in plant biomass representing the second most abundant polysaccharide in the biosphere, after cellulose. Plays an important role in causing fusarium head blight (FHB) on cereal crops. The chain is Endo-1,4-beta-xylanase A (XYLA) from Gibberella zeae (strain ATCC MYA-4620 / CBS 123657 / FGSC 9075 / NRRL 31084 / PH-1) (Wheat head blight fungus).